The sequence spans 453 residues: Proton extrusion protein PxcA (453 aa).

Residues 147 to 189 (SQDKETQTLDNKSTNQTNSKLSNNNKISSGQNDSRLESASQKT) are disordered. A compositionally biased stretch (polar residues) spans 154 to 163 (TLDNKSTNQT). Residues 164 to 175 (NSKLSNNNKISS) show a composition bias toward low complexity. The segment covering 176 to 189 (GQNDSRLESASQKT) has biased composition (polar residues). Helical transmembrane passes span 235 to 255 (FILLLIIVPLLTHQLTKTFLL), 330 to 350 (SIGNVFADLFSVTAFAIVIVS), 377 to 397 (LIILFTDMFVGFHSPHGWEVI), and 413 to 433 (FNFLFIATFPVILDTVLKYWI).

It belongs to the CemA family.

It is found in the cell inner membrane. Its function is as follows. Required for H(+) efflux immediately after light irradiation to form a rapid H(+) concentration gradient across the thylakoid membranes. Together with PxcL, contributes to transient H(+) uptake following dark to light transition. The sequence is that of Proton extrusion protein PxcA from Crocosphaera subtropica (strain ATCC 51142 / BH68) (Cyanothece sp. (strain ATCC 51142)).